The chain runs to 439 residues: Vacuolar protein sorting-associated protein 4 (439 aa).

One can recognise an MIT domain in the interval 8 to 75; it reads LSKGIDLVQK…TRAEQLKDHL (68 aa). The interval 76 to 113 is disordered; it reads EKQAQNKSTAESSVNGSTKAKKSNGDGNGSGDDNDDAD. Over residues 80-93 the composition is skewed to polar residues; it reads QNKSTAESSVNGST. 175 to 182 provides a ligand contact to ATP; the sequence is GPPGTGKS.

The protein belongs to the AAA ATPase family. In terms of assembly, monomer or homodimer (in nucleotide-free form). Decamer, dodecamer or tetradecamer of two stacked respective homooligomeric rings (when bound to ATP); the dodecameric form seems to be predominant.

It localises to the endosome membrane. Functionally, pre-vacuolar protein sorting protein involved in the transport of biosynthetic membrane proteins from the prevacuolar/endosomal compartment to the vacuole. Required for multivesicular body (MVB) protein sorting. Catalyzes the ATP-dependent dissociation of class E VPS proteins from endosomal membranes, such as the disassembly of the ESCRT-III complex. Required for extracellular secretion of the secreted aspartyl proteases SAP2, SAP4, SAP5, and SAP6. Its regulation of the pre-vacuolar secretory pathway is critical for virulence. The protein is Vacuolar protein sorting-associated protein 4 of Candida albicans (strain SC5314 / ATCC MYA-2876) (Yeast).